Consider the following 265-residue polypeptide: Regulator of calcineurin 2 (265 aa).

Ser104 and Ser110 each carry phosphoserine. Disordered stretches follow at residues Leu127–Ala213 and Glu242–His265. Phosphothreonine is present on Thr132. Composition is skewed to low complexity over residues Ser141 to Pro161 and Leu182 to Leu202. Phosphoserine is present on residues Ser152, Ser157, Ser160, Ser183, Ser187, Ser193, Ser201, and Ser255.

In terms of processing, phosphorylation of Ser-152 and Ser-160 is induced 2-fold in response to mating pheromone.

It localises to the cytoplasm. This chain is Regulator of calcineurin 2 (RCN2), found in Saccharomyces cerevisiae (strain ATCC 204508 / S288c) (Baker's yeast).